A 481-amino-acid chain; its full sequence is Proline--tRNA ligase (481 aa).

This sequence belongs to the class-II aminoacyl-tRNA synthetase family. ProS type 3 subfamily. In terms of assembly, homodimer.

It localises to the cytoplasm. It catalyses the reaction tRNA(Pro) + L-proline + ATP = L-prolyl-tRNA(Pro) + AMP + diphosphate. Catalyzes the attachment of proline to tRNA(Pro) in a two-step reaction: proline is first activated by ATP to form Pro-AMP and then transferred to the acceptor end of tRNA(Pro). The chain is Proline--tRNA ligase from Prosthecochloris aestuarii (strain DSM 271 / SK 413).